Reading from the N-terminus, the 458-residue chain is Glycine--tRNA ligase (458 aa).

Residues R97 and E171 each coordinate substrate. Residues 203 to 205 (RNE), 213 to 218 (FRTREF), 287 to 288 (EL), and 331 to 334 (GADR) each bind ATP. Residue 218 to 222 (FEQME) coordinates substrate. Position 327 to 331 (327 to 331 (EPSLG)) interacts with substrate.

It belongs to the class-II aminoacyl-tRNA synthetase family. Homodimer.

The protein resides in the cytoplasm. The enzyme catalyses tRNA(Gly) + glycine + ATP = glycyl-tRNA(Gly) + AMP + diphosphate. Catalyzes the attachment of glycine to tRNA(Gly). The protein is Glycine--tRNA ligase of Bacillus anthracis.